Reading from the N-terminus, the 779-residue chain is Endonuclease MutS2 (779 aa).

328–335 is a binding site for ATP; the sequence is GPNTGGKT. Residues 704 to 779 enclose the Smr domain; it reads LDLRGKRYEE…GSGATIVTLG (76 aa).

It belongs to the DNA mismatch repair MutS family. MutS2 subfamily. As to quaternary structure, homodimer. Binds to stalled ribosomes, contacting rRNA.

Its function is as follows. Endonuclease that is involved in the suppression of homologous recombination and thus may have a key role in the control of bacterial genetic diversity. Functionally, acts as a ribosome collision sensor, splitting the ribosome into its 2 subunits. Detects stalled/collided 70S ribosomes which it binds and splits by an ATP-hydrolysis driven conformational change. Acts upstream of the ribosome quality control system (RQC), a ribosome-associated complex that mediates the extraction of incompletely synthesized nascent chains from stalled ribosomes and their subsequent degradation. Probably generates substrates for RQC. The chain is Endonuclease MutS2 from Streptococcus agalactiae serotype Ia (strain ATCC 27591 / A909 / CDC SS700).